The chain runs to 465 residues: tRNA modification GTPase MnmE (465 aa).

Residues R21, E85, and K124 each coordinate (6S)-5-formyl-5,6,7,8-tetrahydrofolate. One can recognise a TrmE-type G domain in the interval 220–387; it reads GVPVAIIGET…LQKMLINAAH (168 aa). N230 contributes to the K(+) binding site. Residues 230–235, 249–255, 274–277, and 337–340 each bind GTP; these read NAGKST, SDIHGTT, DTAG, and NKAD. S234 is a Mg(2+) binding site. 3 residues coordinate K(+): S249, I251, and T254. T255 lines the Mg(2+) pocket. K465 contributes to the (6S)-5-formyl-5,6,7,8-tetrahydrofolate binding site.

This sequence belongs to the TRAFAC class TrmE-Era-EngA-EngB-Septin-like GTPase superfamily. TrmE GTPase family. In terms of assembly, homodimer. Heterotetramer of two MnmE and two MnmG subunits. K(+) serves as cofactor.

It is found in the cytoplasm. Its function is as follows. Exhibits a very high intrinsic GTPase hydrolysis rate. Involved in the addition of a carboxymethylaminomethyl (cmnm) group at the wobble position (U34) of certain tRNAs, forming tRNA-cmnm(5)s(2)U34. The protein is tRNA modification GTPase MnmE of Bacteroides thetaiotaomicron (strain ATCC 29148 / DSM 2079 / JCM 5827 / CCUG 10774 / NCTC 10582 / VPI-5482 / E50).